We begin with the raw amino-acid sequence, 807 residues long: MPDLKSKTLSSQSLGAAIPPEIVYQILTYQFRDLLRNDHPGTAEKFNENLTTFVKSNLTVNKTFSHICQVLIYRYCNLTTAKRFHGLLQTLKGNRCLCNKIEVADFQELTSIGLGRSSEMNKMIKNLTNETLLEFLMLTKANLREFLACENIQDDLDDNIIKYILSPGKVLSVVDFCGCSGTTFTESFIKALDKYYPNKSIDQYRLEPIQQNYQITCLGLNDCIDLPSHVLWKILKMLPELQKLDLSHTSIDDSTLYHGIPHWKNLTHLSLATCLQVTPRAVLEFFSHHPTITDPDNTSTLEWLNVSVIAHSSSWNEVHTMFLLKKLCQHGHNKTLQYLNIGGLPLHVAPSFGEDPISESTYYYQCRDSLQFIKWNFPKLKSLSIKGNSIPISTLVEFLTPIDQDHPNCAQKLKFLNISGNSYVNKWTIQDSLLYTCSPSLVALEVSFDSWQQIEKLNDRHEIIAYRYKNPNSVIKDISTAEQVKWKCYIDSSYGRRYWLYKTDPFLNRDDLDSKSNLTRYDFEGHKIIEIINQPDFLKFAQSKIMLGCGLVPQSGIRRKLCYRDLKPPVSQFLNRKGAISLGDTPLPIITPTLPRGGWRIIHNEDDNNSHVEDSQNHVNAIPRRNSLLSRPTLRSNNGSSSANPFAINVSPASQIRDGLYWDRSVHDLRELSLQEQRIQELADEQQELRTIANFEETDDEYLHDPDLQRRRSQLHLFESSRSRSGNKTRPSLTGEHSSSASFLSFSHFNHLHKRKNYYFTHPDEFVYDPKDPLTTQRYRLHFEIVNEYQVFGCIERGMYRYYSLKA.

The F-box domain occupies 220 to 266 (LNDCIDLPSHVLWKILKMLPELQKLDLSHTSIDDSTLYHGIPHWKNL). Residues 607-616 (DNNSHVEDSQ) are compositionally biased toward basic and acidic residues. Disordered regions lie at residues 607–647 (DNNS…NPFA) and 716–739 (HLFE…EHSS). 2 stretches are compositionally biased toward polar residues: residues 627–644 (SLLS…SSAN) and 723–736 (SRSG…LTGE).

In terms of assembly, interacts with SKP1 and CDC53. Component of the probable SCF(YBR352W) complex containing CDC53, SKP1, RBX1 and YBR352W.

The protein operates within protein modification; protein ubiquitination. In terms of biological role, substrate recognition component of a SCF (SKP1-CUL1-F-box protein) E3 ubiquitin-protein ligase complex which mediates the ubiquitination and subsequent proteasomal degradation of target proteins. Probably recognizes and binds to phosphorylated target proteins. This chain is F-box protein YLR352W, found in Saccharomyces cerevisiae (strain ATCC 204508 / S288c) (Baker's yeast).